A 138-amino-acid chain; its full sequence is Small ribosomal subunit protein uS9c (138 aa).

This sequence belongs to the universal ribosomal protein uS9 family.

Its subcellular location is the plastid. It localises to the chloroplast. In Phaeodactylum tricornutum (strain CCAP 1055/1), this protein is Small ribosomal subunit protein uS9c (rps9).